A 92-amino-acid polypeptide reads, in one-letter code: Envelope glycoprotein J (92 aa).

A signal peptide spans 1 to 22; it reads MDRYAVRTWGIVGILGCAAVGA. Topologically, residues 23-49 are extracellular; sequence APTGPASDTTNATARLPTHPPLIRSGG. N33 carries N-linked (GlcNAc...) asparagine; by host glycosylation. The chain crosses the membrane as a helical span at residues 50–70; that stretch reads FAVPLIVGGLCLMILGMACLL. The Cytoplasmic segment spans residues 71 to 92; that stretch reads EVLRRLGRELARCCPHAGQFAP.

Belongs to the alphaherpesvirinae glycoprotein J family.

It localises to the host Golgi apparatus membrane. Its subcellular location is the host endoplasmic reticulum membrane. The protein resides in the host endosome membrane. Functionally, functions as an activator of viral protein expression and virus production. In turn, promotes cell-to-cell spread as well as syncytia formation. The sequence is that of Envelope glycoprotein J (gJ) from Homo sapiens (Human).